The chain runs to 122 residues: Small ribosomal subunit protein uS13 (122 aa).

The disordered stretch occupies residues 93–122 (RRSLPVRGQRTHTNARTRKGPAKPIAGKKK).

This sequence belongs to the universal ribosomal protein uS13 family. As to quaternary structure, part of the 30S ribosomal subunit. Forms a loose heterodimer with protein S19. Forms two bridges to the 50S subunit in the 70S ribosome.

Located at the top of the head of the 30S subunit, it contacts several helices of the 16S rRNA. In the 70S ribosome it contacts the 23S rRNA (bridge B1a) and protein L5 of the 50S subunit (bridge B1b), connecting the 2 subunits; these bridges are implicated in subunit movement. Contacts the tRNAs in the A and P-sites. The chain is Small ribosomal subunit protein uS13 from Chelativorans sp. (strain BNC1).